The chain runs to 767 residues: MSLGRLLRRASSKASDLLTLTPGGSGSGSPSVLDGEIIYSKNNVCVHPPEGLQGLGEHHPGYLCLYMEKDEMLGATLILAWVPNSRIQRQDEEALRYITPESSPVRKAPRPRGRRTRSSGASHQPSPTELRPTLTPKDEDILVVAQSVPDRMLASPAPEDEEKLAQGLGVDGAQPASQPACSPSGILSTVSPQDVTEEGREPRPEAGEEDGSLELSAEGVSRDSSFDSDSDTFSSPFCLSPISAALAESRGSVFLESDSSPPSSSDAGLRFPDSNGLLQTPRWDEPQRVCALEQICGVFRVDLGHMRSLRLFFSDEACTSGQLVVASRESQYKVFHFHHGGLDKLSDVFQQWKYCTEMQLKDQQVAPDKTCMQFSIRRPKLPSSETHPEESMYKRLGVSAWLNHLNELGQVEEEYKLRKAIFFGGIDVSIRGEVWPFLLRYYSHESTSEEREALRLQKRKEYSEIQQKRLSMTPEEHRAFWRNVQFTVDKDVVRTDRNNQFFRGEDNPNVESMRRILLNYAVYNPAVGYSQGMSDLVAPILAEVLDESDTFWCFVGLMQNTIFVSSPRDEDMEKQLLYLRELLRLTHVRFYQHLVSLGEDGLQMLFCHRWLLLCFKREFPEAEALRIWEACWAHYQTDYFHLFICVAIVAIYGDDVIEQQLATDQMLLHFGNLAMHMNGELVLRKARSLLYQFRLLPRIPCSLHDLCKLCGSGMWDSGSMPAVECTGHHPGSESCPYGGTVEMPSPKSLREGKKGPKTPQDGFGFRR.

Disordered regions lie at residues 93–138 and 169–228; these read EALR…TPKD and GVDG…SFDS. Over residues 107 to 117 the composition is skewed to basic residues; it reads KAPRPRGRRTR. Over residues 175–194 the composition is skewed to polar residues; it reads PASQPACSPSGILSTVSPQD. Basic and acidic residues predominate over residues 197–206; that stretch reads EEGREPRPEA. In terms of domain architecture, Rab-GAP TBC spans 425–635; it reads GIDVSIRGEV…RIWEACWAHY (211 aa). The interval 729–767 is disordered; that stretch reads HPGSESCPYGGTVEMPSPKSLREGKKGPKTPQDGFGFRR.

Functionally, may act as a GTPase-activating protein for Rab family protein(s). The chain is TBC1 domain family member 16 (TBC1D16) from Homo sapiens (Human).